The primary structure comprises 284 residues: Transmembrane protein 163b (284 aa).

A disordered region spans residues Met1–Ala44. Over Met1–Ala83 the chain is Cytoplasmic. Residues Leu84 to Val104 form a helical membrane-spanning segment. Residues Ser105–Ala111 are Extracellular-facing. A helical transmembrane segment spans residues Ser112–Trp132. Residues Arg133–Arg145 lie on the Cytoplasmic side of the membrane. Residues Glu146–Val166 form a helical membrane-spanning segment. The Extracellular portion of the chain corresponds to Lys167–Asp182. A helical membrane pass occupies residues Phe183–Phe203. Topologically, residues Met204 to Arg212 are cytoplasmic. Residues Ala213–Ile233 traverse the membrane as a helical segment. Residues Ser234–Ser243 are Extracellular-facing. A helical transmembrane segment spans residues Val244–Val264. Residues Lys265–Glu284 are Cytoplasmic-facing.

Belongs to the TMEM163 family.

The protein localises to the cytoplasmic vesicle. It localises to the secretory vesicle. The protein resides in the synaptic vesicle membrane. Its subcellular location is the early endosome membrane. It is found in the late endosome membrane. The protein localises to the lysosome membrane. It localises to the cell membrane. The catalysed reaction is Zn(2+)(in) = Zn(2+)(out). Zinc ion transporter that mediates zinc efflux and plays a crucial role in intracellular zinc homeostasis. Binds the divalent cations Zn(2+), Ni(2+), and to a minor extent Cu(2+). Is a functional modulator of P2X purinoceptors, including P2RX1, P2RX3, P2RX4 and P2RX7. Plays a role in central nervous system development and is required for myelination, and survival and proliferation of oligodendrocytes. The sequence is that of Transmembrane protein 163b from Danio rerio (Zebrafish).